A 263-amino-acid polypeptide reads, in one-letter code: Small ribosomal subunit protein eS4, Y isoform 1 (263 aa).

Residues 42–104 (LPLIVFLRNR…TGEHFRLVYD (63 aa)) enclose the S4 RNA-binding domain.

It belongs to the eukaryotic ribosomal protein eS4 family.

This chain is Small ribosomal subunit protein eS4, Y isoform 1 (RPS4Y1), found in Homo sapiens (Human).